The primary structure comprises 329 residues: Ketol-acid reductoisomerase (NADP(+)) (329 aa).

The KARI N-terminal Rossmann domain maps to 1-181 (MKIYYDQDAD…GGTRGGVLTT (181 aa)). NADP(+) contacts are provided by residues 24-27 (YGSQ), Arg-47, and 82-85 (DQHQ). Residue His-107 is part of the active site. Gly-133 is a binding site for NADP(+). Positions 182-327 (TFKEETETDL…AKLRGMMSWL (146 aa)) constitute a KARI C-terminal knotted domain. Mg(2+) contacts are provided by Asp-190, Glu-194, Glu-226, and Glu-230. Ser-251 contacts substrate.

It belongs to the ketol-acid reductoisomerase family. It depends on Mg(2+) as a cofactor.

The catalysed reaction is (2R)-2,3-dihydroxy-3-methylbutanoate + NADP(+) = (2S)-2-acetolactate + NADPH + H(+). The enzyme catalyses (2R,3R)-2,3-dihydroxy-3-methylpentanoate + NADP(+) = (S)-2-ethyl-2-hydroxy-3-oxobutanoate + NADPH + H(+). It functions in the pathway amino-acid biosynthesis; L-isoleucine biosynthesis; L-isoleucine from 2-oxobutanoate: step 2/4. It participates in amino-acid biosynthesis; L-valine biosynthesis; L-valine from pyruvate: step 2/4. Functionally, involved in the biosynthesis of branched-chain amino acids (BCAA). Catalyzes an alkyl-migration followed by a ketol-acid reduction of (S)-2-acetolactate (S2AL) to yield (R)-2,3-dihydroxy-isovalerate. In the isomerase reaction, S2AL is rearranged via a Mg-dependent methyl migration to produce 3-hydroxy-3-methyl-2-ketobutyrate (HMKB). In the reductase reaction, this 2-ketoacid undergoes a metal-dependent reduction by NADPH to yield (R)-2,3-dihydroxy-isovalerate. In Solidesulfovibrio magneticus (strain ATCC 700980 / DSM 13731 / RS-1) (Desulfovibrio magneticus), this protein is Ketol-acid reductoisomerase (NADP(+)).